A 225-amino-acid chain; its full sequence is 2-phytyl-1,4-naphtoquinone methyltransferase (225 aa).

The protein belongs to the class I-like SAM-binding methyltransferase superfamily. MenG/UbiE family.

It carries out the reaction demethylphylloquinol + S-adenosyl-L-methionine = phylloquinol + S-adenosyl-L-homocysteine + H(+). Its pathway is cofactor biosynthesis; phylloquinone biosynthesis. Methyltransferase required for the conversion of 2-phytyl-1,4-beta-naphthoquinol to phylloquinol. The protein is 2-phytyl-1,4-naphtoquinone methyltransferase of Thermosynechococcus vestitus (strain NIES-2133 / IAM M-273 / BP-1).